Here is a 600-residue protein sequence, read N- to C-terminus: Aspartate--tRNA ligase (600 aa).

Glu175 is a binding site for L-aspartate. The aspartate stretch occupies residues 199 to 202 (QLFK). Arg221 lines the L-aspartate pocket. Residues 221–223 (RDE) and Gln230 contribute to the ATP site. His448 lines the L-aspartate pocket. Glu484 contacts ATP. Arg491 is an L-aspartate binding site. Position 536–539 (536–539 (GLDR)) interacts with ATP.

Belongs to the class-II aminoacyl-tRNA synthetase family. Type 1 subfamily. In terms of assembly, homodimer.

It localises to the cytoplasm. The enzyme catalyses tRNA(Asp) + L-aspartate + ATP = L-aspartyl-tRNA(Asp) + AMP + diphosphate. In terms of biological role, catalyzes the attachment of L-aspartate to tRNA(Asp) in a two-step reaction: L-aspartate is first activated by ATP to form Asp-AMP and then transferred to the acceptor end of tRNA(Asp). In Limosilactobacillus reuteri (strain DSM 20016) (Lactobacillus reuteri), this protein is Aspartate--tRNA ligase.